We begin with the raw amino-acid sequence, 380 residues long: 1-deoxy-D-xylulose 5-phosphate reductoisomerase (380 aa).

Residues Ser-10, Gly-11, Ser-12, Ile-13, Gly-36, Lys-37, Asn-38, and Asn-120 each contribute to the NADPH site. 1-deoxy-D-xylulose 5-phosphate is bound at residue Lys-121. Glu-122 is an NADPH binding site. Asp-146 serves as a coordination point for Mn(2+). Ser-147, Glu-148, Ser-172, and His-195 together coordinate 1-deoxy-D-xylulose 5-phosphate. Glu-148 is a binding site for Mn(2+). Gly-201 serves as a coordination point for NADPH. Positions 208, 213, 214, and 217 each coordinate 1-deoxy-D-xylulose 5-phosphate. Glu-217 serves as a coordination point for Mn(2+).

It belongs to the DXR family. The cofactor is Mg(2+). Requires Mn(2+) as cofactor.

The catalysed reaction is 2-C-methyl-D-erythritol 4-phosphate + NADP(+) = 1-deoxy-D-xylulose 5-phosphate + NADPH + H(+). It participates in isoprenoid biosynthesis; isopentenyl diphosphate biosynthesis via DXP pathway; isopentenyl diphosphate from 1-deoxy-D-xylulose 5-phosphate: step 1/6. Its function is as follows. Catalyzes the NADPH-dependent rearrangement and reduction of 1-deoxy-D-xylulose-5-phosphate (DXP) to 2-C-methyl-D-erythritol 4-phosphate (MEP). In Bacillus cereus (strain AH187), this protein is 1-deoxy-D-xylulose 5-phosphate reductoisomerase.